We begin with the raw amino-acid sequence, 20 residues long: D-alpha-glycerophosphatase (20 aa).

As to quaternary structure, monomer. Requires Mg(2+) as cofactor. Mn(2+) serves as cofactor.

Its subcellular location is the cytoplasm. Its pathway is polyol metabolism; glycerol biosynthesis. In Bacillus licheniformis, this protein is D-alpha-glycerophosphatase.